Consider the following 262-residue polypeptide: Sulfur carrier protein FdhD (262 aa).

Residue Cys105 is the Cysteine persulfide intermediate of the active site. 246–251 (FVRKNR) serves as a coordination point for Mo-bis(molybdopterin guanine dinucleotide).

It belongs to the FdhD family.

Its subcellular location is the cytoplasm. Required for formate dehydrogenase (FDH) activity. Acts as a sulfur carrier protein that transfers sulfur from IscS to the molybdenum cofactor prior to its insertion into FDH. This chain is Sulfur carrier protein FdhD, found in Picrophilus torridus (strain ATCC 700027 / DSM 9790 / JCM 10055 / NBRC 100828 / KAW 2/3).